The sequence spans 569 residues: Endo-1,4-beta-xylanase 5 (569 aa).

The signal sequence occupies residues 1-25; the sequence is MKNINNGFFLCMLLLLWCFVHSGIS. 3 N-linked (GlcNAc...) asparagine glycosylation sites follow: asparagine 197, asparagine 261, and asparagine 307. One can recognise a GH10 domain in the interval 209 to 500; the sequence is EQTKPSFLLG…NTATGDVIDK (292 aa). Glutamate 332 (proton donor) is an active-site residue. The N-linked (GlcNAc...) asparagine glycan is linked to asparagine 346. The Nucleophile role is filled by glutamate 439. Asparagine 490, asparagine 536, and asparagine 544 each carry an N-linked (GlcNAc...) asparagine glycan.

The protein belongs to the glycosyl hydrolase 10 (cellulase F) family.

It carries out the reaction Endohydrolysis of (1-&gt;4)-beta-D-xylosidic linkages in xylans.. Its pathway is glycan degradation; xylan degradation. Its function is as follows. Binds to and hydrolyzes insoluble and soluble xylan substrates. This Arabidopsis thaliana (Mouse-ear cress) protein is Endo-1,4-beta-xylanase 5.